Here is a 461-residue protein sequence, read N- to C-terminus: Siroheme synthase (461 aa).

The precorrin-2 dehydrogenase /sirohydrochlorin ferrochelatase stretch occupies residues 1–204 (MDYFPIFCQL…GDTTQAQQQV (204 aa)). Residues 22–23 (EV) and 43–44 (GR) each bind NAD(+). The residue at position 128 (Ser-128) is a Phosphoserine. Positions 216-461 (GEVTLVGAGP…NWFRCEAASA (246 aa)) are uroporphyrinogen-III C-methyltransferase. Pro-225 lines the S-adenosyl-L-methionine pocket. The Proton acceptor role is filled by Asp-248. The active-site Proton donor is Lys-270. S-adenosyl-L-methionine-binding positions include 301–303 (GGD), Ile-306, 331–332 (TA), Met-382, and Gly-411.

The protein in the N-terminal section; belongs to the precorrin-2 dehydrogenase / sirohydrochlorin ferrochelatase family. It in the C-terminal section; belongs to the precorrin methyltransferase family.

It carries out the reaction uroporphyrinogen III + 2 S-adenosyl-L-methionine = precorrin-2 + 2 S-adenosyl-L-homocysteine + H(+). It catalyses the reaction precorrin-2 + NAD(+) = sirohydrochlorin + NADH + 2 H(+). The catalysed reaction is siroheme + 2 H(+) = sirohydrochlorin + Fe(2+). The protein operates within cofactor biosynthesis; adenosylcobalamin biosynthesis; precorrin-2 from uroporphyrinogen III: step 1/1. It functions in the pathway cofactor biosynthesis; adenosylcobalamin biosynthesis; sirohydrochlorin from precorrin-2: step 1/1. Its pathway is porphyrin-containing compound metabolism; siroheme biosynthesis; precorrin-2 from uroporphyrinogen III: step 1/1. It participates in porphyrin-containing compound metabolism; siroheme biosynthesis; siroheme from sirohydrochlorin: step 1/1. The protein operates within porphyrin-containing compound metabolism; siroheme biosynthesis; sirohydrochlorin from precorrin-2: step 1/1. Its function is as follows. Multifunctional enzyme that catalyzes the SAM-dependent methylations of uroporphyrinogen III at position C-2 and C-7 to form precorrin-2 via precorrin-1. Then it catalyzes the NAD-dependent ring dehydrogenation of precorrin-2 to yield sirohydrochlorin. Finally, it catalyzes the ferrochelation of sirohydrochlorin to yield siroheme. This Edwardsiella ictaluri (strain 93-146) protein is Siroheme synthase.